Consider the following 175-residue polypeptide: Ribosome maturation factor RimM (175 aa).

A PRC barrel domain is found at Glu-98–Phe-175.

Belongs to the RimM family. In terms of assembly, binds ribosomal protein uS19.

The protein localises to the cytoplasm. Its function is as follows. An accessory protein needed during the final step in the assembly of 30S ribosomal subunit, possibly for assembly of the head region. Essential for efficient processing of 16S rRNA. May be needed both before and after RbfA during the maturation of 16S rRNA. It has affinity for free ribosomal 30S subunits but not for 70S ribosomes. The protein is Ribosome maturation factor RimM of Pseudomonas aeruginosa (strain ATCC 15692 / DSM 22644 / CIP 104116 / JCM 14847 / LMG 12228 / 1C / PRS 101 / PAO1).